A 407-amino-acid chain; its full sequence is MDGLPGRALGAACLLLLAAGWLGPEAWGSPTPPPTPAAPPPPPPPGSPGGSQDTCTSCGGFRRPEELGRVDGDFLEAVKRHILSRLQMRGRPNITHAVPKAAMVTALRKLHAGKVREDGRVEIPHLDGHASPGADGQERVSEIISFAETDGLASSRVRLYFFISNEGNQNLFVVQASLWLYLKLLPYVLEKGSRRKVRVKVYFQEQGHGDRWNMVEKRVDLKRSGWHTFPLTEAIQALFERGERRLNLDVQCDSCQELAVVPVFVDPGEESHRPFVVVQARLGDSRHRIRKRGLECDGRTNLCCRQQFFIDFRLIGWNDWIIAPTGYYGNYCEGSCPAYLAGVPGSASSFHTAVVNQYRMRGLNPGTVNSCCIPTKLSTMSMLYFDDEYNIVKRDVPNMIVEECGCA.

A signal peptide spans methionine 1–glycine 28. Positions alanine 26 to arginine 62 are disordered. The propeptide occupies serine 29–arginine 292. Pro residues predominate over residues proline 30–serine 47. Residue asparagine 93 is glycosylated (N-linked (GlcNAc...) asparagine). 4 disulfides stabilise this stretch: cysteine 296–cysteine 304, cysteine 303–cysteine 372, cysteine 332–cysteine 404, and cysteine 336–cysteine 406.

Belongs to the TGF-beta family. In terms of assembly, dimeric, linked by one or more disulfide bonds. Inhibin B is a dimer of alpha and beta-B. Activin B is a homodimer of beta-B. Activin AB is a dimer of beta-A and beta-B. Interacts with FST and FSTL3. Activin B interacts with BMPR2.

The protein localises to the secreted. In terms of biological role, inhibins and activins inhibit and activate, respectively, the secretion of follitropin by the pituitary gland. Inhibins/activins are involved in regulating a number of diverse functions such as hypothalamic and pituitary hormone secretion, gonadal hormone secretion, germ cell development and maturation, erythroid differentiation, insulin secretion, nerve cell survival, embryonic axial development or bone growth, depending on their subunit composition. Inhibins appear to oppose the functions of activins. Activin B is a dimer of alpha and beta-B that plays a role in several essential biological processes including embryonic development, stem cell maintenance and differentiation, haematopoiesis, cell proliferation and wound healing. Signals through type I receptor ACVR1C, abundantly expressed in pancreatic beta cells, and type II receptors like ACVR2A or BMPR2. Upon ligand binding, these receptors phosphorylate intracellular signaling mediators SMAD2 and SMAD3, which form a complex with SMAD4, translocate to the nucleus, and regulate gene expression. Plays a crucial role in the induction of hepcidin by inflammation through activation of ACVR1C and subsequent phosphorylation of SMAD1/5/8. Regulates adipocyte lipid metabolism by decreasing non-esterified fatty acids and glycerol release and increases intracellular triglyceride content. Stimulates wound healing by promoting cell migration and hair follicle regeneration through the JNK and ERK signaling pathways downstream of RHOA. Its function is as follows. Inhibin B is a dimer of alpha and beta-B that plays a crucial role in the regulation of the reproductive system by inhibiting the secretion of follicle-stimulating hormone (FSH) from the anterior pituitary gland. Thereby, maintains reproductive homeostasis in both males and females. Acts as a more potent suppressor of FSH release than inhibin A. Functions as competitive receptor antagonist binding activin type II receptors with high affinity in the presence of the TGF-beta type III coreceptor/TGFBR3L. This chain is Inhibin beta B chain (INHBB), found in Homo sapiens (Human).